Reading from the N-terminus, the 225-residue chain is 3-dehydroquinate dehydratase (225 aa).

Residues Ser6, 30–32, and Arg62 each bind 3-dehydroquinate; that span reads EWR. His118 acts as the Proton donor/acceptor in catalysis. Residue Lys143 is the Schiff-base intermediate with substrate of the active site. Residues Arg186, Thr205, and Gln209 each contribute to the 3-dehydroquinate site.

The protein belongs to the type-I 3-dehydroquinase family. As to quaternary structure, homodimer.

It catalyses the reaction 3-dehydroquinate = 3-dehydroshikimate + H2O. The protein operates within metabolic intermediate biosynthesis; chorismate biosynthesis; chorismate from D-erythrose 4-phosphate and phosphoenolpyruvate: step 3/7. Functionally, involved in the third step of the chorismate pathway, which leads to the biosynthesis of aromatic amino acids. Catalyzes the cis-dehydration of 3-dehydroquinate (DHQ) and introduces the first double bond of the aromatic ring to yield 3-dehydroshikimate. The polypeptide is 3-dehydroquinate dehydratase (Streptococcus gordonii (strain Challis / ATCC 35105 / BCRC 15272 / CH1 / DL1 / V288)).